Consider the following 158-residue polypeptide: MKCPFCNSEETRVIDTRLTDDGHVVRRRRECEHCGGRFTTYERFEQKPIFVVKKGGQRERFDRNKVLNGILKACEKRPVSIEEIENMSSEIEQEVLRSGKAEISSKEIGEMVMEKLKRKDRVAYVRFASVYKEFRDLDHFMDIIRELKDELKKRDRRD.

A zinc finger lies at 3-34; sequence CPFCNSEETRVIDTRLTDDGHVVRRRRECEHC. The 91-residue stretch at 49-139 folds into the ATP-cone domain; sequence IFVVKKGGQR…VYKEFRDLDH (91 aa).

The protein belongs to the NrdR family. It depends on Zn(2+) as a cofactor.

Functionally, negatively regulates transcription of bacterial ribonucleotide reductase nrd genes and operons by binding to NrdR-boxes. In Kosmotoga olearia (strain ATCC BAA-1733 / DSM 21960 / TBF 19.5.1), this protein is Transcriptional repressor NrdR.